The primary structure comprises 377 residues: Cell division cycle-associated protein 7 (377 aa).

2 disordered regions span residues 58-113 (RTRS…EEDG) and 144-211 (IFSG…EEDK). The span at 76–100 (PARNTRRAANTKAAPPKPSESSAND) shows a compositional bias: low complexity. Positions 148–173 (RHSLPGHRTKDSKSPRRRTFPGVASR) are interaction with MYC. A Nuclear localization signal motif is present at residues 163-179 (RRRTFPGVASRRNPERR). A Phosphothreonine modification is found at Thr-166. At Ser-193 the chain carries Phosphoserine. Thr-199 is modified (phosphothreonine). Positions 199–210 (TEEEEDEEEEED) are enriched in acidic residues. A Glycyl lysine isopeptide (Lys-Gly) (interchain with G-Cter in SUMO2) cross-link involves residue Lys-211. The residue at position 220 (Ser-220) is a Phosphoserine. A mediates transcriptional activity region spans residues 253–377 (EEEIRNICSN…SLKQEFEMQA (125 aa)).

Interacts with MYC (via C-terminus), YWHAE and YWHAZ. In terms of processing, phosphorylation at Thr-166 promotes interaction with YWHAE and YWHAZ, dissociation from MYC and sequestration in the cytoplasm.

The protein localises to the nucleus. Its subcellular location is the cytoplasm. Functionally, participates in MYC-mediated cell transformation and apoptosis; induces anchorage-independent growth and clonogenicity in lymphoblastoid cells. Insufficient to induce tumorigenicity when overexpressed but contributes to MYC-mediated tumorigenesis. May play a role as transcriptional regulator. This chain is Cell division cycle-associated protein 7 (Cdca7), found in Rattus norvegicus (Rat).